A 472-amino-acid polypeptide reads, in one-letter code: 2-oxoisovalerate dehydrogenase subunit alpha 2, mitochondrial (472 aa).

185 to 187 (QYR) is a binding site for thiamine diphosphate. Residues S234, T239, and Q240 each contribute to the K(+) site.

The protein belongs to the BCKDHA family. As to quaternary structure, heterotetramer of alpha and beta chains. It depends on thiamine diphosphate as a cofactor.

It localises to the mitochondrion matrix. The catalysed reaction is N(6)-[(R)-lipoyl]-L-lysyl-[protein] + 3-methyl-2-oxobutanoate + H(+) = N(6)-[(R)-S(8)-2-methylpropanoyldihydrolipoyl]-L-lysyl-[protein] + CO2. In terms of biological role, the branched-chain alpha-keto dehydrogenase complex catalyzes the overall conversion of alpha-keto acids to acyl-CoA and CO(2). It contains multiple copies of three enzymatic components: branched-chain alpha-keto acid decarboxylase (E1), lipoamide acyltransferase (E2) and lipoamide dehydrogenase (E3). The sequence is that of 2-oxoisovalerate dehydrogenase subunit alpha 2, mitochondrial from Arabidopsis thaliana (Mouse-ear cress).